The primary structure comprises 332 residues: Phospholipase A2 inhibitor beta (332 aa).

Residues 1-23 form the signal peptide; it reads MKSSVPSLLFVSLVMSLNSYTQQ. Asn35 is a glycosylation site (N-linked (GlcNAc...) asparagine). 8 LRR repeats span residues 78-101, 103-125, 127-149, 150-173, 175-197, 198-221, 223-245, and 247-269; these read LPNL…LFRN, PELH…IFTS, TSLT…WFET, LKEL…CFDK, EKLT…MFSG, LDNL…SFHG, PKLS…VFQP, and NHXV…VAIP. Asn232 carries N-linked (GlcNAc...) asparagine glycosylation. Residue Asn272 is glycosylated (N-linked (GlcNAc...) asparagine). The region spanning 280 to 331 is the LRRCT domain; the sequence is NPWACNCRMDNLLTWVKEHKIDLYSKQEIVCAFPKSFKGEEATSLHRSQICP.

This sequence belongs to the beta-type phospholipase A2 inhibitor family. As to quaternary structure, homotrimer.

It localises to the secreted. In terms of biological role, inhibits the enzymatic activity of the basic phospholipase A2 (PLA2). This Elaphe climacophora (Japanese rat snake) protein is Phospholipase A2 inhibitor beta.